The following is a 140-amino-acid chain: uncharacterized protein (140 aa).

The HTH cro/C1-type domain maps to 26–80 (IRSQRETAHVSMRQLAERSGVSNPYLSQVERGLRKPSADVLSQIAKALRVSAEVL). The H-T-H motif DNA-binding region spans 37 to 56 (MRQLAERSGVSNPYLSQVER).

This is an uncharacterized protein from Mycobacterium tuberculosis (strain ATCC 25618 / H37Rv).